Here is a 78-residue protein sequence, read N- to C-terminus: RNA-binding protein Hfq (78 aa).

The region spanning 10 to 69 (DPFLNTLRKEHVPVSIYLVNGIKLQGQIESFDQYVVLLRNTVTQMVYKHAISTVVPARAV) is the Sm domain.

Belongs to the Hfq family. As to quaternary structure, homohexamer.

Functionally, RNA chaperone that binds small regulatory RNA (sRNAs) and mRNAs to facilitate mRNA translational regulation in response to envelope stress, environmental stress and changes in metabolite concentrations. Also binds with high specificity to tRNAs. The protein is RNA-binding protein Hfq of Bordetella avium (strain 197N).